A 557-amino-acid polypeptide reads, in one-letter code: 2-isopropylmalate synthase (557 aa).

Residues 33 to 307 (PIWCSSDLRD…DPQLDFSDID (275 aa)) enclose the Pyruvate carboxyltransferase domain. Residues Asp-42, His-246, His-248, and Asn-282 each contribute to the Mg(2+) site. The segment at 439 to 557 (ANSPYALVSH…SLSQQEAKAA (119 aa)) is regulatory domain.

It belongs to the alpha-IPM synthase/homocitrate synthase family. LeuA type 2 subfamily. As to quaternary structure, homodimer. The cofactor is Mg(2+).

It localises to the cytoplasm. It catalyses the reaction 3-methyl-2-oxobutanoate + acetyl-CoA + H2O = (2S)-2-isopropylmalate + CoA + H(+). It functions in the pathway amino-acid biosynthesis; L-leucine biosynthesis; L-leucine from 3-methyl-2-oxobutanoate: step 1/4. Its function is as follows. Catalyzes the condensation of the acetyl group of acetyl-CoA with 3-methyl-2-oxobutanoate (2-ketoisovalerate) to form 3-carboxy-3-hydroxy-4-methylpentanoate (2-isopropylmalate). This Pseudomonas putida (strain W619) protein is 2-isopropylmalate synthase.